The following is a 557-amino-acid chain: 2-isopropylmalate synthase (557 aa).

Positions 33 to 307 (PLWLSTDLRD…DPGLDFSDID (275 aa)) constitute a Pyruvate carboxyltransferase domain. Mg(2+)-binding residues include Asp-42, His-246, His-248, and Asn-282. Residues 439 to 557 (AETPYALKGH…LGQQASIRAA (119 aa)) form a regulatory domain region.

The protein belongs to the alpha-IPM synthase/homocitrate synthase family. LeuA type 2 subfamily. In terms of assembly, homodimer. It depends on Mg(2+) as a cofactor.

The protein resides in the cytoplasm. The enzyme catalyses 3-methyl-2-oxobutanoate + acetyl-CoA + H2O = (2S)-2-isopropylmalate + CoA + H(+). The protein operates within amino-acid biosynthesis; L-leucine biosynthesis; L-leucine from 3-methyl-2-oxobutanoate: step 1/4. In terms of biological role, catalyzes the condensation of the acetyl group of acetyl-CoA with 3-methyl-2-oxobutanoate (2-ketoisovalerate) to form 3-carboxy-3-hydroxy-4-methylpentanoate (2-isopropylmalate). The protein is 2-isopropylmalate synthase of Azotobacter vinelandii (strain DJ / ATCC BAA-1303).